Here is a 427-residue protein sequence, read N- to C-terminus: Histidine--tRNA ligase (427 aa).

Belongs to the class-II aminoacyl-tRNA synthetase family. Homodimer.

The protein localises to the cytoplasm. The catalysed reaction is tRNA(His) + L-histidine + ATP = L-histidyl-tRNA(His) + AMP + diphosphate + H(+). This is Histidine--tRNA ligase from Alteromonas mediterranea (strain DSM 17117 / CIP 110805 / LMG 28347 / Deep ecotype).